The primary structure comprises 217 residues: Ras-related protein RIC2 (217 aa).

Residues 21–28 (GDSGVGKS), 69–73 (DTAGQ), and 127–130 (NKSD) contribute to the GTP site. S-geranylgeranyl cysteine attachment occurs at residues C214 and C215.

The protein belongs to the small GTPase superfamily. Rab family.

It is found in the cell membrane. Its function is as follows. Possesses GTPase activity. The chain is Ras-related protein RIC2 (RIC2) from Oryza sativa subsp. japonica (Rice).